A 443-amino-acid polypeptide reads, in one-letter code: Ribulose bisphosphate carboxylase large chain (443 aa).

Substrate contacts are provided by asparagine 89 and threonine 139. The Proton acceptor role is filled by lysine 141. Lysine 143 contacts substrate. Residues lysine 167, aspartate 169, and glutamate 170 each contribute to the Mg(2+) site. Lysine 167 bears the N6-carboxylysine mark. Histidine 260 (proton acceptor) is an active-site residue. Positions 261, 293, and 345 each coordinate substrate.

It belongs to the RuBisCO large chain family. Type I subfamily. Heterohexadecamer of 8 large chains and 8 small chains; disulfide-linked. The disulfide link is formed within the large subunit homodimers. Mg(2+) is required as a cofactor. Post-translationally, the disulfide bond which can form in the large chain dimeric partners within the hexadecamer appears to be associated with oxidative stress and protein turnover.

The protein resides in the plastid. The protein localises to the chloroplast. The enzyme catalyses 2 (2R)-3-phosphoglycerate + 2 H(+) = D-ribulose 1,5-bisphosphate + CO2 + H2O. It carries out the reaction D-ribulose 1,5-bisphosphate + O2 = 2-phosphoglycolate + (2R)-3-phosphoglycerate + 2 H(+). RuBisCO catalyzes two reactions: the carboxylation of D-ribulose 1,5-bisphosphate, the primary event in carbon dioxide fixation, as well as the oxidative fragmentation of the pentose substrate in the photorespiration process. Both reactions occur simultaneously and in competition at the same active site. The protein is Ribulose bisphosphate carboxylase large chain of Villarsia calthifolia (Marsh flower).